We begin with the raw amino-acid sequence, 313 residues long: Tagatose-6-phosphate kinase (313 aa).

This sequence belongs to the carbohydrate kinase PfkB family. LacC subfamily.

It carries out the reaction D-tagatofuranose 6-phosphate + ATP = D-tagatofuranose 1,6-bisphosphate + ADP + H(+). It participates in carbohydrate metabolism; D-tagatose 6-phosphate degradation; D-glyceraldehyde 3-phosphate and glycerone phosphate from D-tagatose 6-phosphate: step 1/2. The chain is Tagatose-6-phosphate kinase from Enterococcus faecalis (strain ATCC 700802 / V583).